The chain runs to 2415 residues: Bradyzoite-formation deficient protein 1 (2415 aa).

Disordered regions lie at residues 369 to 392, 418 to 481, and 761 to 845; these read WNKPEAARQEYHRASASARGPEET, HLTS…PYTR, and DGCG…QDTQ. A compositionally biased stretch (basic residues) spans 419–429; that stretch reads LTSRQHPNPRP. The segment covering 430 to 443 has biased composition (basic and acidic residues); that stretch reads RMKEEHCGREREVL. 2 stretches are compositionally biased toward polar residues: residues 444–460 and 832–843; these read SSEQPSDCGETQKTPAS and PRTTSSSSYGQD. The Myb-like domain maps to 921 to 968; it reads WSAEEDASLAELVSRKGFKWALISSQLTGAFGIPRTGKQCRERWFNHV. Positions 969-1023 constitute an HTH myb-type domain; the sequence is NPEVKKGDWSAEEDAMILMLQNELGNRWATIAKKLRGRTENAVKNRFISLSNARL. The segment at residues 996-1019 is a DNA-binding region (H-T-H motif); the sequence is WATIAKKLRGRTENAVKNRFISLS. Disordered stretches follow at residues 1027 to 1050, 1098 to 1127, 1206 to 1270, 1319 to 1343, 1501 to 1521, 1905 to 1932, 1959 to 2013, and 2161 to 2222; these read RPKRDGSSADCFSNRRTGSGKSSG, VSRPRQCTGTSPSCGHPSAGEGDPSHLKNT, NDER…NGLD, PACDHRGAPQNSVESGEQSPDAQRQ, QLWTSQETESDTNPSPNQQHE, VSRDKQREPPKNGLTGCDVPEYLGTSQS, RVRW…GSTA, and GTDA…EMQD. Residues 1036-1050 are compositionally biased toward polar residues; that stretch reads DCFSNRRTGSGKSSG. Residues 1227 to 1237 show a composition bias toward basic and acidic residues; that stretch reads AHEHADIARSD. Composition is skewed to polar residues over residues 1327–1343 and 1501–1520; these read PQNSVESGEQSPDAQRQ and QLWTSQETESDTNPSPNQQH. Polar residues predominate over residues 1974 to 1985; the sequence is SVSSGASNSATT. Residues 2181–2197 are compositionally biased toward basic and acidic residues; it reads QAHRRDGHDMQRVQRCD.

Its subcellular location is the nucleus. Its function is as follows. Master transcription factor that controls the differentiation of acute-stage tachyzoite parasites into chronic-stage bradyzoites, which form intracellular cysts resistant to immune clearance and existing therapies. Sufficient to drive differentiation into bradyzoite stage. Following translation in response to stress conditions, binds to the promoter of many chronic stage-specific genes and promotes their expression, thereby driving differentiation into bradyzoites. This is Bradyzoite-formation deficient protein 1 from Toxoplasma gondii (strain ATCC 50611 / Me49).